Reading from the N-terminus, the 134-residue chain is UPF0412 protein YaaI (134 aa).

The signal sequence occupies residues 1 to 23 (MKSVFTLSASLAISLLLCCTAQA).

It belongs to the UPF0412 family.

The protein is UPF0412 protein YaaI of Escherichia coli O7:K1 (strain IAI39 / ExPEC).